The chain runs to 362 residues: Aspartate-semialdehyde dehydrogenase (362 aa).

8 residues coordinate NADP(+): Thr15, Gly16, Ala17, Val18, Ser40, Ser43, Leu87, and Asp88. Cys154 functions as the Acyl-thioester intermediate in the catalytic mechanism. Position 186 (Gly186) interacts with NADP(+). His251 functions as the Proton acceptor in the catalytic mechanism. Asn340 contributes to the NADP(+) binding site.

Belongs to the aspartate-semialdehyde dehydrogenase family. In terms of assembly, homotetramer; dimer of dimers.

It localises to the cytoplasm. The protein localises to the cytosol. It is found in the nucleus. The catalysed reaction is L-aspartate 4-semialdehyde + phosphate + NADP(+) = 4-phospho-L-aspartate + NADPH + H(+). Its pathway is amino-acid biosynthesis; L-methionine biosynthesis via de novo pathway; L-homoserine from L-aspartate: step 2/3. The protein operates within amino-acid biosynthesis; L-threonine biosynthesis; L-threonine from L-aspartate: step 2/5. Its function is as follows. Catalyzes the NADPH-dependent formation of L-aspartate 4-semialdehyde (L-ASA) by the reductive dephosphorylation of 4-phospho-L-aspartate. Mediates the second step in the biosynthesis of amino acids that derive from aspartate (the aspartate family of amino acids), including methioinine and threonine, the latter of which is a precursor to isoleucine. This Trichophyton rubrum (strain ATCC MYA-4607 / CBS 118892) (Athlete's foot fungus) protein is Aspartate-semialdehyde dehydrogenase.